The primary structure comprises 177 residues: Voltage-dependent L-type calcium channel subunit alpha-1C (177 aa).

Residues 27–45 form a helical membrane-spanning segment; that stretch reads ITFFRLFRVMRLVKLLSRG. The helical transmembrane segment at 64 to 84 threads the bilayer; that stretch reads YVALLIVMLFFIYAVIGMQVF. N-linked (GlcNAc...) asparagine glycosylation is present at asparagine 90. The segment at residues 107–125 is an intramembrane region (pore-forming); the sequence is AVLLLFRCATGEAWQEIML. Positions 116-119 match the Selectivity filter of repeat IV motif; the sequence is TGEA. Cysteine 133 and cysteine 149 are joined by a disulfide. A glycan (N-linked (GlcNAc...) asparagine) is linked at asparagine 141. The helical transmembrane segment at 154-177 threads the bilayer; that stretch reads AVFYFISFYMLCAFLIIDLFVAVI.

This sequence belongs to the calcium channel alpha-1 subunit (TC 1.A.1.11) family. CACNA1C subfamily. In terms of assembly, component of a calcium channel complex consisting of a pore-forming alpha subunit (CACNA1C) and ancillary beta, gamma and delta subunits. The channel complex contains alpha, beta, gamma and delta subunits in a 1:1:1:1 ratio, i.e. it contains only one of each type of subunit. CACNA1C channel activity is modulated by ancillary subunits, such as CACNB2, CACNB3, CACNA2D1 and CACNA2D4. Post-translationally, phosphorylation by PKA activates the channel.

It is found in the cell membrane. The protein localises to the perikaryon. It localises to the postsynaptic density membrane. Its subcellular location is the cell projection. The protein resides in the dendrite. It is found in the sarcolemma. The protein localises to the T-tubule. It catalyses the reaction Ca(2+)(in) = Ca(2+)(out). Its activity is regulated as follows. Inhibited by dihydropyridines (DHP), such as isradipine. Channel activity is regulated by Ca(2+) and calmodulin. Pore-forming, alpha-1C subunit of the voltage-gated calcium channel that gives rise to L-type calcium currents. Mediates influx of calcium ions into the cytoplasm, and thereby triggers calcium release from the sarcoplasm. Plays an important role in excitation-contraction coupling in the heart. Required for normal heart development and normal regulation of heart rhythm. Required for normal contraction of smooth muscle cells in blood vessels and in the intestine. Essential for normal blood pressure regulation via its role in the contraction of arterial smooth muscle cells. Long-lasting (L-type) calcium channels belong to the 'high-voltage activated' (HVA) group. The polypeptide is Voltage-dependent L-type calcium channel subunit alpha-1C (CACNA1C) (Gallus gallus (Chicken)).